A 424-amino-acid chain; its full sequence is Imidazolonepropionase (424 aa).

Residues H84 and H86 each coordinate Fe(3+). Positions 84 and 86 each coordinate Zn(2+). 3 residues coordinate 4-imidazolone-5-propanoate: R93, Y156, and H189. Y156 contributes to the N-formimidoyl-L-glutamate binding site. Residue H254 coordinates Fe(3+). A Zn(2+)-binding site is contributed by H254. Position 257 (E257) interacts with 4-imidazolone-5-propanoate. D328 lines the Fe(3+) pocket. D328 contacts Zn(2+). Residues N330 and G332 each contribute to the N-formimidoyl-L-glutamate site. A 4-imidazolone-5-propanoate-binding site is contributed by S333.

Belongs to the metallo-dependent hydrolases superfamily. HutI family. The cofactor is Zn(2+). It depends on Fe(3+) as a cofactor.

It localises to the cytoplasm. The enzyme catalyses 4-imidazolone-5-propanoate + H2O = N-formimidoyl-L-glutamate. The protein operates within amino-acid degradation; L-histidine degradation into L-glutamate; N-formimidoyl-L-glutamate from L-histidine: step 3/3. Catalyzes the hydrolytic cleavage of the carbon-nitrogen bond in imidazolone-5-propanoate to yield N-formimidoyl-L-glutamate. It is the third step in the universal histidine degradation pathway. This chain is Imidazolonepropionase, found in Geobacillus sp. (strain WCH70).